The following is a 1342-amino-acid chain: DNA-directed RNA polymerase subunit beta (1342 aa).

Belongs to the RNA polymerase beta chain family. The RNAP catalytic core consists of 2 alpha, 1 beta, 1 beta' and 1 omega subunit. When a sigma factor is associated with the core the holoenzyme is formed, which can initiate transcription.

The enzyme catalyses RNA(n) + a ribonucleoside 5'-triphosphate = RNA(n+1) + diphosphate. In terms of biological role, DNA-dependent RNA polymerase catalyzes the transcription of DNA into RNA using the four ribonucleoside triphosphates as substrates. In Buchnera aphidicola subsp. Schizaphis graminum (strain Sg), this protein is DNA-directed RNA polymerase subunit beta.